Here is a 399-residue protein sequence, read N- to C-terminus: Probable F-box protein At4g22060 (399 aa).

In terms of domain architecture, F-box spans 12 to 48 (SWSKLPLDLLIMVFERLGFVDFQRTKSVCLAWLYASR).

This Arabidopsis thaliana (Mouse-ear cress) protein is Probable F-box protein At4g22060.